The primary structure comprises 179 residues: ATP synthase subunit delta (179 aa).

The protein belongs to the ATPase delta chain family. As to quaternary structure, F-type ATPases have 2 components, F(1) - the catalytic core - and F(0) - the membrane proton channel. F(1) has five subunits: alpha(3), beta(3), gamma(1), delta(1), epsilon(1). F(0) has three main subunits: a(1), b(2) and c(10-14). The alpha and beta chains form an alternating ring which encloses part of the gamma chain. F(1) is attached to F(0) by a central stalk formed by the gamma and epsilon chains, while a peripheral stalk is formed by the delta and b chains.

It localises to the cell membrane. F(1)F(0) ATP synthase produces ATP from ADP in the presence of a proton or sodium gradient. F-type ATPases consist of two structural domains, F(1) containing the extramembraneous catalytic core and F(0) containing the membrane proton channel, linked together by a central stalk and a peripheral stalk. During catalysis, ATP synthesis in the catalytic domain of F(1) is coupled via a rotary mechanism of the central stalk subunits to proton translocation. Its function is as follows. This protein is part of the stalk that links CF(0) to CF(1). It either transmits conformational changes from CF(0) to CF(1) or is implicated in proton conduction. The sequence is that of ATP synthase subunit delta from Clostridium botulinum (strain ATCC 19397 / Type A).